The following is a 134-amino-acid chain: Replication enhancer protein (134 aa).

This sequence belongs to the geminiviridae replication enhancer protein family. In terms of assembly, homooligomer. Interacts with the replication-associated protein (REP). Interacts with host proliferating cell nuclear antigen (PCNA). Interacts with host retinoblastoma-related protein 1 (RBR1), and may thereby deregulate the host cell cycle. Oligomerization and interaction with PCNA are necessary for optimal replication enhancement.

Its function is as follows. Increases viral DNA accumulation. Enhances infectivity and symptom expression. The protein is Replication enhancer protein of Tomato leaf curl virus (strain Australia) (ToLCV).